The primary structure comprises 201 residues: NAD(P)H dehydrogenase (quinone) (201 aa).

Residues isoleucine 7–valine 192 form the Flavodoxin-like domain. Residues serine 13–isoleucine 18 and threonine 81–phenylalanine 83 each bind FMN. Residue tyrosine 15 participates in NAD(+) binding. Tryptophan 101 is a binding site for substrate. Residues serine 116–glycine 121 and histidine 136 contribute to the FMN site.

The protein belongs to the WrbA family. FMN serves as cofactor.

It catalyses the reaction a quinone + NADH + H(+) = a quinol + NAD(+). The enzyme catalyses a quinone + NADPH + H(+) = a quinol + NADP(+). The polypeptide is NAD(P)H dehydrogenase (quinone) (Shigella sonnei (strain Ss046)).